The primary structure comprises 105 residues: Small ribosomal subunit protein uS17 (105 aa).

It belongs to the universal ribosomal protein uS17 family. In terms of assembly, part of the 30S ribosomal subunit.

One of the primary rRNA binding proteins, it binds specifically to the 5'-end of 16S ribosomal RNA. The sequence is that of Small ribosomal subunit protein uS17 from Thermus aquaticus.